A 102-amino-acid polypeptide reads, in one-letter code: PE family immunomodulator PE5 (102 aa).

A PE domain is found at 3–92 (LRVVPEGLAA…GASYLAGDAA (90 aa)).

The protein belongs to the mycobacterial PE family.

It is found in the secreted. Its subcellular location is the cell envelope. It localises to the cell surface. In terms of biological role, important for the siderophore-mediated iron-acquisition function of ESX-3. May play a pivotal role in the evasion of host immune response by M.tuberculosis. Mediates production of IL-10 via activation of the p38 and ERK1/2 mitogen-activated protein kinase (MAPK) signaling pathways. The sequence is that of PE family immunomodulator PE5 from Mycobacterium tuberculosis (strain ATCC 25618 / H37Rv).